We begin with the raw amino-acid sequence, 188 residues long: MKGLIIIGSAQVGSHTNALSKYLKGQLGEHDVEVEIFDLAEKPIHQLDFAGTTQAVDEIKNNVKSLQNKAMEADFLILGTPNYHGSFSGILKNALDHLNMDHFKMKPVGLICNSGGIVSSEPLSHLRVIVRSLLGIAVPTQIATHDSDYAKLEDGTLYLEDNEFQLRSKLFVDQIVSFVTNSPYEHLK.

It belongs to the azoreductase type 2 family. Homotetramer. The cofactor is FMN.

Catalyzes the reductive cleavage of azo bond in aromatic azo compounds to the corresponding amines. Requires NADPH, but not NADH, as an electron donor for its activity. The chain is FMN-dependent NADPH-azoreductase (azo1) from Staphylococcus epidermidis (strain ATCC 12228 / FDA PCI 1200).